We begin with the raw amino-acid sequence, 340 residues long: Tetrathionate reductase subunit C (340 aa).

9 consecutive transmembrane segments (helical) span residues 19–39 (WLPW…AALF), 57–77 (ALLI…ADLH), 94–114 (WMPW…LWFL), 128–148 (VTKW…IYTG), 164–184 (AFPV…MIVA), 195–215 (ILWG…MWVS), 236–256 (YYAV…SLAL), 266–286 (VLLV…LLIQ), and 306–326 (TDGW…LIII).

It belongs to the NrfD family. In terms of assembly, probably composed of three subunits: TtrA, TtrB and TtrC.

The protein localises to the cell inner membrane. Part of a membrane-bound tetrathionate reductase that catalyzes the reduction of tetrathionate to thiosulfate. TtrC probably anchors TtrA and TtrB to the periplasmic face of the cytoplasmic membrane. May transfer electrons from membrane quinol to TtrB. During mice infection, the ability to use tetrathionate as an electron acceptor is a growth advantage for S.typhimurium over the competing microbiota in the lumen of the inflamed gut. The protein is Tetrathionate reductase subunit C (ttrC) of Salmonella typhimurium (strain LT2 / SGSC1412 / ATCC 700720).